Consider the following 504-residue polypeptide: Multicopper oxidase MmcO (504 aa).

Positions 1-44 form a signal peptide, tat-type signal; it reads MPELATSGNAFDKRRFSRRGFLGAGIASGFALAACASKPTASGA. His120, His122, His161, and His163 together coordinate Cu cation. The region spanning 190–349 is the Plastocyanin-like domain; it reads EWIIILDDWT…NALARALLST (160 aa). Positions 437, 440, 442, 485, 486, 487, and 491 each coordinate Cu cation.

The protein belongs to the multicopper oxidase family. It depends on Cu cation as a cofactor. In terms of processing, predicted to be exported by the Tat system. The position of the signal peptide cleavage has not been experimentally proven.

It is found in the cell inner membrane. It localises to the periplasm. The enzyme catalyses 4 Fe(2+) + O2 + 4 H(+) = 4 Fe(3+) + 2 H2O. In terms of biological role, required for copper resistance. In vitro, oxidizes organic substrates and Fe(2+). May act in vivo by oxidation of toxic periplasmic Cu(+). In Mycobacterium tuberculosis (strain ATCC 25618 / H37Rv), this protein is Multicopper oxidase MmcO.